The primary structure comprises 603 residues: Serine protease 56 (603 aa).

The N-terminal stretch at 1-19 is a signal peptide; sequence MLLAVLLLLPLPSSWFAHG. The tract at residues 64–96 is disordered; sequence SHECRGSGRPRPQALLQDPPEPGPCGERRPSTA. N-linked (GlcNAc...) asparagine glycosylation is present at N97. One can recognise a Peptidase S1 domain in the interval 105–337; it reads IVGGSAAPPG…FKDWLQEQMS (233 aa). C130 and C146 are oxidised to a cystine. Catalysis depends on charge relay system residues H145 and D191. 3 disulfides stabilise this stretch: C225–C292, C256–C271, and C282–C313. S286 (charge relay system) is an active-site residue. Disordered stretches follow at residues 442–474 and 573–603; these read PARE…NGCP and EGPW…ARQP.

This sequence belongs to the peptidase S1 family. In terms of tissue distribution, expressed neural retina, cornea, sclera and optic nerve.

Functionally, serine protease required during eye development. The polypeptide is Serine protease 56 (PRSS56) (Homo sapiens (Human)).